The primary structure comprises 405 residues: MAALLLSSHLTAASSSSTTSPTARPAPSFVSFRAANAAPKGARRGWPFLASSVEPPPAASAAQPFRSLAPSETTVLVTGATGYIGRYVVRELLRRGHPVVAVARPRSGLRGRNGPDEVVADLAPARVVFSDVTDAGALRADLSPHGPIHAAVCCLASRGGGVRDSWRVDYRATLHTLQAARGLGAAHFVLLSAVCVQKPLLEFQRAKLRFEGELAAEASRDPSFTYSIVRPTAFFKSLGGQVETVKNGQPYVMFGDGKLCACKPISEEDLAAFIADCISDEGKANKILPIGGPGKALTPLEQGEMLFRLLGREPRFIKVPIQVMDAAIWVLDALAKVFPGVEDAAEFGKIGRYYASESMLVLDPDTGEYSDEMTPSYGSDTLEQFFERVIREGMAGQELGEQTIF.

A chloroplast-targeting transit peptide spans 1–58; the sequence is MAALLLSSHLTAASSSSTTSPTARPAPSFVSFRAANAAPKGARRGWPFLASSVEPPPA.

Its subcellular location is the plastid. The protein localises to the chloroplast. It carries out the reaction protochlorophyllide a + NADP(+) = 3,8-divinyl protochlorophyllide a + NADPH + H(+). It participates in porphyrin-containing compound metabolism; chlorophyll biosynthesis. Functionally, catalyzes the conversion of divinyl chlorophyllide to monovinyl chlorophyllide. Reduces the 8-vinyl group of the tetrapyrrole to an ethyl group using NADPH as the reductant. Can use (3,8-divinyl)-chlorophyllide a (DV-Chlidea) &gt; (3,8-divinyl)-chlorophyll a (DV-Chla) &gt; (3,8-divinyl)-protochlorophyllide a (DV-Pchlidea) &gt; (3,8-divinyl)-magnesium-protoporphyrin IX monomethyl ester (DV-MPE) &gt; (3,8-divinyl)-magnesium-protoporphyrin IX (DV-Mg-Proto) as substrates. This chain is Divinyl chlorophyllide a 8-vinyl-reductase, chloroplastic (DVR), found in Oryza sativa subsp. indica (Rice).